The following is a 309-amino-acid chain: General transcription factor IIH subunit 3 (309 aa).

A C4-type zinc finger spans residues 269 to 286 (CSVCLSIFCNFSPICTTC).

Belongs to the TFB4 family. Part of a TFIID-containing RNA polymerase II pre-initiation complex that is composed of TBP and at least GTF2A1, GTF2A2, GTF2E1, GTF2E2, GTF2F1, GTF2H2, GTF2H3, GTF2H4, GTF2H5, GTF2B, TCEA1, ERCC2, ERCC3, TAF1, TAF2, TAF3, TAF4, TAF5, TAF6, TAF7, TAF8, TAF9, TAF10, TAF11, TAF12 and TAF13. Component of the 7-subunit TFIIH core complex composed of XPB/ERCC3, XPD/ERCC2, GTF2H1, GTF2H2, GTF2H3, GTF2H4 and GTF2H5, which is active in NER. The core complex associates with the 3-subunit CDK-activating kinase (CAK) module composed of CCNH/cyclin H, CDK7 and MNAT1 to form the 10-subunit holoenzyme (holo-TFIIH) active in transcription. Interacts with RARA; the interaction requires prior phosphorylation of RARA on 'Ser-369' which then enhances interaction of RARA with CDK7.

Its subcellular location is the nucleus. Functionally, component of the general transcription and DNA repair factor IIH (TFIIH) core complex, which is involved in general and transcription-coupled nucleotide excision repair (NER) of damaged DNA and, when complexed to CAK, in RNA transcription by RNA polymerase II. In NER, TFIIH acts by opening DNA around the lesion to allow the excision of the damaged oligonucleotide and its replacement by a new DNA fragment. In transcription, TFIIH has an essential role in transcription initiation. When the pre-initiation complex (PIC) has been established, TFIIH is required for promoter opening and promoter escape. Phosphorylation of the C-terminal tail (CTD) of the largest subunit of RNA polymerase II by the kinase module CAK controls the initiation of transcription. This Bos taurus (Bovine) protein is General transcription factor IIH subunit 3 (GTF2H3).